A 130-amino-acid polypeptide reads, in one-letter code: Small ribosomal subunit protein uS8 (130 aa).

It belongs to the universal ribosomal protein uS8 family. As to quaternary structure, part of the 30S ribosomal subunit. Contacts proteins S5 and S12.

One of the primary rRNA binding proteins, it binds directly to 16S rRNA central domain where it helps coordinate assembly of the platform of the 30S subunit. This chain is Small ribosomal subunit protein uS8, found in Wigglesworthia glossinidia brevipalpis.